A 418-amino-acid chain; its full sequence is Deoxyribonuclease Tat-D (418 aa).

Positions 185, 226, 277, and 327 each coordinate a divalent metal cation.

The protein belongs to the metallo-dependent hydrolases superfamily. TatD-type hydrolase family. Requires Mg(2+) as cofactor.

The protein resides in the cytoplasm. Functionally, has both endo- and exonuclease activities. Incises double-stranded DNA without obvious specificity via its endonuclease activity and excises the DNA from the 3'-to 5'-end by its exonuclease activity. May have a role in apoptosis. This is Deoxyribonuclease Tat-D from Saccharomyces cerevisiae (strain ATCC 204508 / S288c) (Baker's yeast).